Consider the following 40-residue polypeptide: Cytochrome b6-f complex subunit 5 (40 aa).

Residues 5–25 (ILLGMVLGFVPVTIAGLLVAA) form a helical membrane-spanning segment.

The protein belongs to the PetG family. In terms of assembly, the 4 large subunits of the cytochrome b6-f complex are cytochrome b6, subunit IV (17 kDa polypeptide, PetD), cytochrome f and the Rieske protein, while the 4 small subunits are PetG, PetL, PetM and PetN. The complex functions as a dimer.

It is found in the cell inner membrane. Functionally, component of the cytochrome b6-f complex, which mediates electron transfer between photosystem II (PSII) and photosystem I (PSI), cyclic electron flow around PSI, and state transitions. PetG is required for either the stability or assembly of the cytochrome b6-f complex. This is Cytochrome b6-f complex subunit 5 from Gloeobacter violaceus (strain ATCC 29082 / PCC 7421).